A 187-amino-acid chain; its full sequence is Peptidoglycan-recognition protein 2 (187 aa).

An N-terminal signal peptide occupies residues 1-19 (MKAFLVALVVAIELTLVFA). Cystine bridges form between Cys-21–Cys-144 and Cys-58–Cys-64. The region spanning 43 to 170 (KPLKYVIIHH…RTVRPTDSPG (128 aa)) is the N-acetylmuramoyl-L-alanine amidase domain.

The protein belongs to the N-acetylmuramoyl-L-alanine amidase 2 family. As to expression, localizes to plasma (at protein level).

Its subcellular location is the secreted. In terms of biological role, peptidoglycan-recognition protein probably involved in innate immunity by binding to peptidoglycans (PGN) of bacteria and activating the prophenoloxidase (proPO) cascade immune response. Binds to 1,3-beta-D-glucan and PGN. The chain is Peptidoglycan-recognition protein 2 (PGRP-2) from Holotrichia diomphalia (Korean black chafer).